Here is a 172-residue protein sequence, read N- to C-terminus: Protein GrpE (172 aa).

The tract at residues 1–23 (MNQDHPEFDSEDLSQNPPETDPL) is disordered.

This sequence belongs to the GrpE family. In terms of assembly, homodimer.

It is found in the cytoplasm. Participates actively in the response to hyperosmotic and heat shock by preventing the aggregation of stress-denatured proteins, in association with DnaK and GrpE. It is the nucleotide exchange factor for DnaK and may function as a thermosensor. Unfolded proteins bind initially to DnaJ; upon interaction with the DnaJ-bound protein, DnaK hydrolyzes its bound ATP, resulting in the formation of a stable complex. GrpE releases ADP from DnaK; ATP binding to DnaK triggers the release of the substrate protein, thus completing the reaction cycle. Several rounds of ATP-dependent interactions between DnaJ, DnaK and GrpE are required for fully efficient folding. The sequence is that of Protein GrpE from Xanthomonas axonopodis pv. citri (strain 306).